The sequence spans 229 residues: Potassium/proton antiporter CemA (229 aa).

Transmembrane regions (helical) follow at residues 7–27 (FLPL…SLSF), 106–126 (MILH…YSIL), and 189–209 (IISG…KYWI).

The protein belongs to the CemA family.

The protein localises to the plastid. It localises to the chloroplast inner membrane. The catalysed reaction is K(+)(in) + H(+)(out) = K(+)(out) + H(+)(in). Its function is as follows. Contributes to K(+)/H(+) antiport activity by supporting proton efflux to control proton extrusion and homeostasis in chloroplasts in a light-dependent manner to modulate photosynthesis. Prevents excessive induction of non-photochemical quenching (NPQ) under continuous-light conditions. Indirectly promotes efficient inorganic carbon uptake into chloroplasts. In Eucalyptus globulus subsp. globulus (Tasmanian blue gum), this protein is Potassium/proton antiporter CemA.